The chain runs to 259 residues: Type III pantothenate kinase (259 aa).

6–13 (DIGNTNVV) is an ATP binding site. Residue 107–110 (GADR) participates in substrate binding. The active-site Proton acceptor is the Asp109. Asp129 is a binding site for K(+). Thr132 provides a ligand contact to ATP. Residue Thr184 coordinates substrate.

This sequence belongs to the type III pantothenate kinase family. As to quaternary structure, homodimer. NH4(+) is required as a cofactor. Requires K(+) as cofactor.

It localises to the cytoplasm. The enzyme catalyses (R)-pantothenate + ATP = (R)-4'-phosphopantothenate + ADP + H(+). Its pathway is cofactor biosynthesis; coenzyme A biosynthesis; CoA from (R)-pantothenate: step 1/5. Functionally, catalyzes the phosphorylation of pantothenate (Pan), the first step in CoA biosynthesis. The protein is Type III pantothenate kinase of Thermomicrobium roseum (strain ATCC 27502 / DSM 5159 / P-2).